Consider the following 209-residue polypeptide: Ubiquitin-conjugating enzyme E2 S (209 aa).

A UBC core domain is found at 14–160 (QTIRQVMREL…ARMMTEIHAQ (147 aa)). C98 (glycyl thioester intermediate) is an active-site residue. Residues 164 to 209 (CGVGASGDAKDDDGPSTKKHAGLDKKLQDKKKEKLLKEKKRMLKRL) are disordered. The span at 171–199 (DAKDDDGPSTKKHAGLDKKLQDKKKEKLL) shows a compositional bias: basic and acidic residues. Residues 200–209 (KEKKRMLKRL) are compositionally biased toward basic residues.

Belongs to the ubiquitin-conjugating enzyme family.

The enzyme catalyses S-ubiquitinyl-[E1 ubiquitin-activating enzyme]-L-cysteine + [E2 ubiquitin-conjugating enzyme]-L-cysteine = [E1 ubiquitin-activating enzyme]-L-cysteine + S-ubiquitinyl-[E2 ubiquitin-conjugating enzyme]-L-cysteine.. The protein operates within protein modification; protein ubiquitination. Its function is as follows. Catalyzes the covalent attachment of ubiquitin to other proteins. Acts as an essential factor of the anaphase promoting complex/cyclosome (APC/C), a cell cycle-regulated ubiquitin ligase that controls progression through mitosis. Acts by specifically elongating polyubiquitin chains initiated by the E2 enzyme vih/UbcH10 on APC/C substrates, enhancing the degradation of APC/C substrates by the proteasome and promoting mitotic exit. The protein is Ubiquitin-conjugating enzyme E2 S of Drosophila yakuba (Fruit fly).